The following is a 536-amino-acid chain: Pre-mRNA-splicing factor SLU7-B (536 aa).

Residues 1–42 form a disordered region; it reads MATASVAFKSREDHRKKLELEEARKAGLAPAEVDEDGKEINP. The span at 9-25 shows a compositional bias: basic and acidic residues; the sequence is KSREDHRKKLELEEARK. A CCHC-type zinc finger spans residues 96-109; that stretch reads CINCGAMTHSSKAC. 2 disordered regions span residues 176 to 201 and 488 to 507; these read LKKLEEKNNNENGDDATSDGEEDLDD and KEDLSRREEKDERKRKYNVN. Acidic residues predominate over residues 187 to 200; it reads NGDDATSDGEEDLD. Residue Ser193 is modified to Phosphoserine. Positions 486-493 match the Nuclear localization signal motif; sequence LKKEDLSR. The segment covering 488 to 501 has biased composition (basic and acidic residues); the sequence is KEDLSRREEKDERK.

It belongs to the SLU7 family. Interacts with PHYB in photobodies under red light.

It localises to the nucleus. In terms of biological role, participates in the second catalytic step of pre-mRNA splicing, when the free hydroxyl group of exon I attacks the 3'-splice site to generate spliced mRNA and the excised lariat intron. Splicing factor acting as a negative regulator of seedling photomorphogenesis by antagonizing PHYB signaling to promote light-induced hypocotyl elongation. Prevents the accumulation of functionally spliced RVE8a form, a circadian clock regulator mediating the transcriptional activation of clock genes containing evening elements (EE), but promotes PIF4 expression to fine-tune hypocotyl elongation in the light. Together with SMP1, involved in the timing of cell cycle arrest during leaf development, in a STRUWWELPETER (SWP) dependent manner; promotes cell proliferation in developing organs. This Arabidopsis thaliana (Mouse-ear cress) protein is Pre-mRNA-splicing factor SLU7-B.